The chain runs to 378 residues: Dual-specificity RNA methyltransferase RlmN (378 aa).

Residue E97 is the Proton acceptor of the active site. The Radical SAM core domain occupies 103–341 (EGDRATLCVS…VMVRKTRGDD (239 aa)). The cysteines at positions 110 and 346 are disulfide-linked. [4Fe-4S] cluster contacts are provided by C117, C121, and C124. Residues 171–172 (GE), S203, 225–227 (SLH), and N303 each bind S-adenosyl-L-methionine. The active-site S-methylcysteine intermediate is the C346.

Belongs to the radical SAM superfamily. RlmN family. The cofactor is [4Fe-4S] cluster.

Its subcellular location is the cytoplasm. The catalysed reaction is adenosine(2503) in 23S rRNA + 2 reduced [2Fe-2S]-[ferredoxin] + 2 S-adenosyl-L-methionine = 2-methyladenosine(2503) in 23S rRNA + 5'-deoxyadenosine + L-methionine + 2 oxidized [2Fe-2S]-[ferredoxin] + S-adenosyl-L-homocysteine. The enzyme catalyses adenosine(37) in tRNA + 2 reduced [2Fe-2S]-[ferredoxin] + 2 S-adenosyl-L-methionine = 2-methyladenosine(37) in tRNA + 5'-deoxyadenosine + L-methionine + 2 oxidized [2Fe-2S]-[ferredoxin] + S-adenosyl-L-homocysteine. In terms of biological role, specifically methylates position 2 of adenine 2503 in 23S rRNA and position 2 of adenine 37 in tRNAs. m2A2503 modification seems to play a crucial role in the proofreading step occurring at the peptidyl transferase center and thus would serve to optimize ribosomal fidelity. In Idiomarina loihiensis (strain ATCC BAA-735 / DSM 15497 / L2-TR), this protein is Dual-specificity RNA methyltransferase RlmN.